A 396-amino-acid chain; its full sequence is 1-deoxy-D-xylulose 5-phosphate reductoisomerase (396 aa).

The NADPH site is built by threonine 15, glycine 16, serine 17, isoleucine 18, glycine 41, and asparagine 130. Lysine 131 contributes to the 1-deoxy-D-xylulose 5-phosphate binding site. Glutamate 132 contributes to the NADPH binding site. Aspartate 155 is a binding site for Mn(2+). 4 residues coordinate 1-deoxy-D-xylulose 5-phosphate: serine 156, glutamate 157, serine 181, and histidine 204. A Mn(2+)-binding site is contributed by glutamate 157. Glycine 210 serves as a coordination point for NADPH. Serine 217, asparagine 222, lysine 223, and glutamate 226 together coordinate 1-deoxy-D-xylulose 5-phosphate. Residue glutamate 226 participates in Mn(2+) binding.

Belongs to the DXR family. The cofactor is Mg(2+). Requires Mn(2+) as cofactor.

It catalyses the reaction 2-C-methyl-D-erythritol 4-phosphate + NADP(+) = 1-deoxy-D-xylulose 5-phosphate + NADPH + H(+). Its pathway is isoprenoid biosynthesis; isopentenyl diphosphate biosynthesis via DXP pathway; isopentenyl diphosphate from 1-deoxy-D-xylulose 5-phosphate: step 1/6. Functionally, catalyzes the NADPH-dependent rearrangement and reduction of 1-deoxy-D-xylulose-5-phosphate (DXP) to 2-C-methyl-D-erythritol 4-phosphate (MEP). The polypeptide is 1-deoxy-D-xylulose 5-phosphate reductoisomerase (Bifidobacterium longum (strain NCC 2705)).